A 171-amino-acid chain; its full sequence is MIDKYEDPFIRIAVMIGGDEYLKVARSLLKAEDATDEEIASSTGLRINMVRKVLYDLFGKSLISGVRVKDERKGWFVYRWRSRREEVESFIENQKKKIMGRLQQRLDYENSSEFYHCGNDDCQRITFEGALEEMFKCPSCGKVLNLKKNDKAKKAFGKKIDEIKKDLQQTF.

In terms of domain architecture, HTH TFE/IIEalpha-type spans 5 to 88; that stretch reads YEDPFIRIAV…RWRSRREEVE (84 aa).

Belongs to the TFE family. Monomer. Interaction with RNA polymerase subunits RpoF and RpoE is necessary for Tfe stimulatory transcription activity. Able to interact with Tbp and RNA polymerase in the absence of DNA promoter. Interacts both with the preinitiation and elongation complexes.

Transcription factor that plays a role in the activation of archaeal genes transcribed by RNA polymerase. Facilitates transcription initiation by enhancing TATA-box recognition by TATA-box-binding protein (Tbp), and transcription factor B (Tfb) and RNA polymerase recruitment. Not absolutely required for transcription in vitro, but particularly important in cases where Tbp or Tfb function is not optimal. It dynamically alters the nucleic acid-binding properties of RNA polymerases by stabilizing the initiation complex and destabilizing elongation complexes. Seems to translocate with the RNA polymerase following initiation and acts by binding to the non template strand of the transcription bubble in elongation complexes. This is Transcription factor E from Cenarchaeum symbiosum (strain A).